A 348-amino-acid polypeptide reads, in one-letter code: Sulfate/thiosulfate import ATP-binding protein CysA (348 aa).

An ABC transporter domain is found at 3–233 (ILIDNISKKF…PATPFVFSLL (231 aa)). Residue 35 to 42 (GPSGSGKS) coordinates ATP.

It belongs to the ABC transporter superfamily. Sulfate/tungstate importer (TC 3.A.1.6) family.

It is found in the plastid. The protein localises to the chloroplast. The catalysed reaction is sulfate(out) + ATP + H2O = sulfate(in) + ADP + phosphate + H(+). The enzyme catalyses thiosulfate(out) + ATP + H2O = thiosulfate(in) + ADP + phosphate + H(+). Its function is as follows. Part of the ABC transporter complex involved in sulfate/thiosulfate import. Responsible for energy coupling to the transport system. The protein is Sulfate/thiosulfate import ATP-binding protein CysA of Mesostigma viride (Green alga).